Reading from the N-terminus, the 886-residue chain is Pyruvate dehydrogenase E1 component (886 aa).

In terms of assembly, homodimer. Part of the PDH complex, consisting of multiple copies of pyruvate dehydrogenase (E1), dihydrolipoamide acetyltransferase (E2) and lipoamide dehydrogenase (E3). It depends on thiamine diphosphate as a cofactor.

It carries out the reaction N(6)-[(R)-lipoyl]-L-lysyl-[protein] + pyruvate + H(+) = N(6)-[(R)-S(8)-acetyldihydrolipoyl]-L-lysyl-[protein] + CO2. Functionally, component of the pyruvate dehydrogenase (PDH) complex, that catalyzes the overall conversion of pyruvate to acetyl-CoA and CO(2). The chain is Pyruvate dehydrogenase E1 component (aceE) from Haemophilus influenzae (strain ATCC 51907 / DSM 11121 / KW20 / Rd).